A 137-amino-acid chain; its full sequence is Endoribonuclease YbeY (137 aa).

Residues His105, His109, and Asp115 each coordinate Zn(2+).

It belongs to the endoribonuclease YbeY family. The cofactor is Zn(2+).

It is found in the cytoplasm. In terms of biological role, single strand-specific metallo-endoribonuclease involved in late-stage 70S ribosome quality control and in maturation of the 3' terminus of the 16S rRNA. The sequence is that of Endoribonuclease YbeY from Chlorobaculum tepidum (strain ATCC 49652 / DSM 12025 / NBRC 103806 / TLS) (Chlorobium tepidum).